A 340-amino-acid polypeptide reads, in one-letter code: Methionine import ATP-binding protein MetN (340 aa).

Residues isoleucine 5–valine 243 form the ABC transporter domain. Glycine 40 to serine 47 is an ATP binding site.

It belongs to the ABC transporter superfamily. Methionine importer (TC 3.A.1.24) family. As to quaternary structure, the complex is composed of two ATP-binding proteins (MetN), two transmembrane proteins (MetI) and a solute-binding protein (MetQ).

It is found in the cell membrane. The enzyme catalyses L-methionine(out) + ATP + H2O = L-methionine(in) + ADP + phosphate + H(+). It catalyses the reaction D-methionine(out) + ATP + H2O = D-methionine(in) + ADP + phosphate + H(+). In terms of biological role, part of the ABC transporter complex MetNIQ involved in methionine import. Responsible for energy coupling to the transport system. The polypeptide is Methionine import ATP-binding protein MetN (Leifsonia xyli subsp. xyli (strain CTCB07)).